The sequence spans 126 residues: Putative regulator AldR (126 aa).

It belongs to the RutC family.

Functionally, implicated in the regulation of isoleucine biosynthesis. The protein is Putative regulator AldR (aldR) of Lactococcus lactis subsp. lactis (strain IL1403) (Streptococcus lactis).